Reading from the N-terminus, the 361-residue chain is D-alanine--D-alanine ligase (361 aa).

The ATP-grasp domain occupies 139–336 (KLLLKEKEIS…FSQIIDNMIN (198 aa)). Residue 167 to 222 (EKNLGYPMIVKPARLGSSIGVSKVVDRKNFEEAVKNVLLFDNKVLVEKWINAREIN) participates in ATP binding. Asp-296, Glu-307, and Asn-309 together coordinate Mg(2+).

Belongs to the D-alanine--D-alanine ligase family. Requires Mg(2+) as cofactor. Mn(2+) serves as cofactor.

The protein resides in the cytoplasm. The enzyme catalyses 2 D-alanine + ATP = D-alanyl-D-alanine + ADP + phosphate + H(+). It participates in cell wall biogenesis; peptidoglycan biosynthesis. Functionally, cell wall formation. This chain is D-alanine--D-alanine ligase, found in Thermosipho melanesiensis (strain DSM 12029 / CIP 104789 / BI429).